A 229-amino-acid polypeptide reads, in one-letter code: Artemin (229 aa).

Ala1 is subject to N-acetylalanine. The Ferritin-like diiron domain maps to 25 to 173; it reads HNFDPECEKA…DCLSNLHCIG (149 aa).

The protein belongs to the ferritin family.

This Artemia salina (Brine shrimp) protein is Artemin.